The primary structure comprises 108 residues: Nucleoid-associated protein Lcho_1975 (108 aa).

It belongs to the YbaB/EbfC family. As to quaternary structure, homodimer.

The protein resides in the cytoplasm. It is found in the nucleoid. Functionally, binds to DNA and alters its conformation. May be involved in regulation of gene expression, nucleoid organization and DNA protection. In Leptothrix cholodnii (strain ATCC 51168 / LMG 8142 / SP-6) (Leptothrix discophora (strain SP-6)), this protein is Nucleoid-associated protein Lcho_1975.